Consider the following 233-residue polypeptide: Cilia- and flagella-associated protein 299 (233 aa).

In terms of tissue distribution, abundantly expressed in testis, specifically in spermatogonia and primary spermatocytes but not in secondary spermatocytes and spermatids.

Its subcellular location is the cytoplasm. The protein localises to the nucleus. In terms of biological role, may be involved in spermatogenesis. This chain is Cilia- and flagella-associated protein 299, found in Mus musculus (Mouse).